A 589-amino-acid polypeptide reads, in one-letter code: Sentrin-specific protease 2 (589 aa).

Residues 28 to 31 carry the Nuclear localization signal motif; that stretch reads KRRR. Serine 32 bears the Phosphoserine mark. A Nuclear localization signal motif is present at residues 46 to 51; it reads PAKRPR. The interval 155–176 is disordered; sequence SEGCNRRPGGRRHSKGNPESSL. The short motif at 317 to 332 is the Nuclear export signal element; that stretch reads LEPDLSEEVSARLRLG. Serine 333 and serine 344 each carry phosphoserine. The interval 396–560 is protease; that stretch reads RITRGDIQTL…FTCKYADYIS (165 aa). Catalysis depends on residues histidine 478 and aspartate 495. Cysteine 548 functions as the Nucleophile in the catalytic mechanism.

This sequence belongs to the peptidase C48 family. As to quaternary structure, binds to SUMO2 and SUMO3. Interacts with the C-terminal domain of NUP153 via its N-terminus. Interacts with MTA1. Post-translationally, polyubiquitinated; which leads to proteasomal degradation.

The protein resides in the nucleus. It localises to the nuclear pore complex. The protein localises to the nucleus membrane. Its subcellular location is the cytoplasm. Its function is as follows. Protease that catalyzes two essential functions in the SUMO pathway. The first is the hydrolysis of an alpha-linked peptide bond at the C-terminal end of the small ubiquitin-like modifier (SUMO) propeptides, SUMO1, SUMO2 and SUMO3 leading to the mature form of the proteins. The second is the deconjugation of SUMO1, SUMO2 and SUMO3 from targeted proteins, by cleaving an epsilon-linked peptide bond between the C-terminal glycine of the mature SUMO and the lysine epsilon-amino group of the target protein. May down-regulate CTNNB1 levels and thereby modulate the Wnt pathway. Deconjugates SUMO2 from MTA1. Plays a dynamic role in adipogenesis by desumoylating and promoting the stabilization of CEBPB. Acts as a regulator of the cGAS-STING pathway by catalyzing desumoylation of CGAS and STING1 during the late phase of viral infection. The protein is Sentrin-specific protease 2 of Homo sapiens (Human).